A 1123-amino-acid polypeptide reads, in one-letter code: Telomerase reverse transcriptase (1123 aa).

The tract at residues 1–230 (MPRAPRCRAV…ARRRRGSPGS (230 aa)) is RNA-interacting domain 1. Residues 58 to 197 (VPWGARPPPA…APGLPGLPGL (140 aa)) form a GQ motif region. The segment at 137 to 141 (WGLLL) is required for regulating specificity for telomeric DNA and for processivity for primer elongation. The tract at residues 202 to 311 (AGAGASADLR…GVPHDPAHPE (110 aa)) is disordered. The Bipartite nuclear localization signal motif lies at 222 to 240 (RRRRGSPGSGVPLAKRPRR). A Phosphoserine; by PKB/AKT1 modification is found at Ser227. The interval 231-308 (GVPLAKRPRR…GPQGVPHDPA (78 aa)) is linker. Low complexity predominate over residues 260 to 279 (PPVSEAPAVTPAVAASPAAS). The interval 309 to 539 (HPETKRFLYC…LARFLVLVDG (231 aa)) is RNA-interacting domain 2. Residues 312 to 317 (TKRFLY) carry the TFLY; involved in RNA binding motif. The segment at 360-510 (ARRMRRLPAR…MKVRDCTWLH (151 aa)) is QFP motif. The CP motif stretch occupies residues 381–401 (LGNHARCPYRALLRTHCPLRA). Ser446 carries the phosphoserine; by DYRK2 modification. Positions 595–926 (EVRRHREARP…CLFPWCGLLL (332 aa)) constitute a Reverse transcriptase domain. Position 697 is a phosphotyrosine; by SRC-type Tyr-kinases (Tyr697). The Mg(2+) site is built by Asp702, Asp859, and Asp860. The tract at residues 905–919 (LGSAAPLQLPAHCLF) is required for oligomerization. Residues 921–925 (WCGLL) are primer grip sequence. A CTE region spans residues 927–1123 (DTRTLEVSCD…LTADFKTILD (197 aa)).

It belongs to the reverse transcriptase family. Telomerase subfamily. As to quaternary structure, catalytic component of the telomerase holoenzyme complex composed of one molecule of TERT, one molecule of WRAP53/TCAB1, two molecules of H/ACA ribonucleoprotein complex subunits DKC1, NOP10, NHP2 and GAR1, and a telomerase RNA template component (TERC). The telomerase holoenzyme complex is associated with TEP1, SMG6/EST1A and POT1. The molecular chaperone HSP90/P23 complex is required for correct assembly and stabilization of the active telomerase. Interacts directly with HSP90A and PTGES3. Interacts with HSPA1A; the interaction occurs in the absence of TERC and dissociates once the complex has formed. Interacts with RAN; the interaction promotes nuclear export of TERT. Interacts with XPO1. Interacts with PTPN11; the interaction retains TERT in the nucleus. Interacts with NCL (via RRM1 and C-terminal RRM4/Arg/Gly-rich domains); the interaction is important for nucleolar localization of TERT. Interacts with SMARCA4 (via the bromodomain); the interaction regulates Wnt-mediated signaling. Interacts with MCRS1 (isoform MCRS2); the interaction inhibits in vitro telomerase activity. Interacts with PIF1; the interaction has no effect on the elongation activity of TERT. Interacts with PML; the interaction recruits TERT to PML bodies and inhibits telomerase activity. Interacts with GNL3L. Interacts with isoform 1 and isoform 2 of NVL. Interacts with DHX36. Interacts with ATF7. In terms of processing, phosphorylation at Tyr-697 under oxidative stress leads to translocation of TERT to the cytoplasm and reduces its antiapoptotic activity. Dephosphorylated by SHP2/PTPN11 leading to nuclear retention. Phosphorylation at Ser-227 by the AKT pathway promotes nuclear location. Phosphorylation at the G2/M phase at Ser-446 by DYRK2 promotes ubiquitination by the EDVP complex and degradation. Ubiquitinated by the EDVP complex, a E3 ligase complex following phosphorylation at Ser-446 by DYRK2. Ubiquitinated leads to proteasomal degradation.

The protein resides in the nucleus. Its subcellular location is the nucleolus. It is found in the nucleoplasm. The protein localises to the chromosome. It localises to the telomere. The protein resides in the cytoplasm. Its subcellular location is the PML body. The enzyme catalyses DNA(n) + a 2'-deoxyribonucleoside 5'-triphosphate = DNA(n+1) + diphosphate. Its function is as follows. Telomerase is a ribonucleoprotein enzyme essential for the replication of chromosome termini in most eukaryotes. Active in progenitor and cancer cells. Inactive, or very low activity, in normal somatic cells. Catalytic component of the teleromerase holoenzyme complex whose main activity is the elongation of telomeres by acting as a reverse transcriptase that adds simple sequence repeats to chromosome ends by copying a template sequence within the RNA component of the enzyme. Catalyzes the RNA-dependent extension of 3'-chromosomal termini with the 6-nucleotide telomeric repeat unit, 5'-TTAGGG-3'. The catalytic cycle involves primer binding, primer extension and release of product once the template boundary has been reached or nascent product translocation followed by further extension. More active on substrates containing 2 or 3 telomeric repeats. Telomerase activity is regulated by a number of factors including telomerase complex-associated proteins, chaperones and polypeptide modifiers. Modulates Wnt signaling. Plays important roles in aging and antiapoptosis. The protein is Telomerase reverse transcriptase (TERT) of Canis lupus familiaris (Dog).